Consider the following 288-residue polypeptide: Glandicoline B O-methyltransferase roqN (288 aa).

S-adenosyl-L-methionine is bound by residues Thr57, Asp82, and 109–110 (DA).

This sequence belongs to the class I-like SAM-binding methyltransferase superfamily.

The enzyme catalyses glandicoline B + S-adenosyl-L-methionine = meleagrin + S-adenosyl-L-homocysteine + H(+). The protein operates within alkaloid biosynthesis. Its function is as follows. Glandicoline B O-methyltransferase; part of the gene cluster that mediates the biosynthesis of the mycotoxin meleagrin. The first stage is catalyzed by the dipeptide synthase roqA which condenses histidine and tryptophan to produce histidyltryptophanyldiketopiperazine (HTD). HTD is then converted to roquefortine C through two possible pathways. In the first pathway, prenyltransferase roqD transforms HTD to the intermediate roquefortine D, which is in turn converted to roquefortine C by the cytochrome P450 monooxygenase roqR. In the second pathway, HTD is first converted to the intermediate dehydrohistidyltryptophanyldi-ketopiperazine (DHTD) by roqR which is then prenylated by roqD to form roquefortine C. Roquefortine C can be further transformed to meleagrin via three more reactions including oxydation to glandicolin A by roqM, which is further reduced to glandicoline B by roqO. Finally, glandicoline B is converted to meleagrin by the glandicoline B O-methyltransferase roqN. More studies identified further branching and additional metabolites produced by the roquefortine/meleagrin cluster, including roquefortine F, roquefortine L, roquefortine M, roquefortine N and neoxaline. This chain is Glandicoline B O-methyltransferase roqN, found in Penicillium rubens (strain ATCC 28089 / DSM 1075 / NRRL 1951 / Wisconsin 54-1255) (Penicillium chrysogenum).